The sequence spans 197 residues: Recombination protein RecR (197 aa).

The C4-type zinc finger occupies 57–72 (CSVCFGITEDDPCRFC). The Toprim domain maps to 79 to 174 (GAICVVEEPQ…RVTRLAHGIP (96 aa)).

The protein belongs to the RecR family.

In terms of biological role, may play a role in DNA repair. It seems to be involved in an RecBC-independent recombinational process of DNA repair. It may act with RecF and RecO. The chain is Recombination protein RecR from Geobacter sulfurreducens (strain ATCC 51573 / DSM 12127 / PCA).